A 344-amino-acid polypeptide reads, in one-letter code: Ribosomal RNA large subunit methyltransferase Cfr (344 aa).

E90 serves as the catalytic Proton acceptor. The region spanning 97 to 330 is the Radical SAM core domain; the sequence is KQGWESFCIS…ATVRTQFGSE (234 aa). An intrachain disulfide couples C104 to C335. Residues C111, C115, and C118 each coordinate [4Fe-4S] cluster. S-adenosyl-L-methionine contacts are provided by residues 157–158, S188, 211–213, and N292; these read GE and SLH. Residue C335 is the S-methylcysteine intermediate of the active site.

It belongs to the radical SAM superfamily. RlmN family. Cfr subfamily. Requires [4Fe-4S] cluster as cofactor.

It is found in the cytoplasm. It catalyses the reaction adenosine(2503) in 23S rRNA + 2 reduced [2Fe-2S]-[ferredoxin] + 2 S-adenosyl-L-methionine = 8-methyladenosine(2503) in 23S rRNA + 5'-deoxyadenosine + L-methionine + 2 oxidized [2Fe-2S]-[ferredoxin] + S-adenosyl-L-homocysteine. Specifically methylates position 8 of adenine 2503 in 23S rRNA. Confers resistance to some classes of antibiotics. In Clostridium botulinum (strain Hall / ATCC 3502 / NCTC 13319 / Type A), this protein is Ribosomal RNA large subunit methyltransferase Cfr.